A 439-amino-acid polypeptide reads, in one-letter code: uncharacterized protein (439 aa).

A YcaO domain is found at 116–439 (GKAASYRAAQ…PMRTPLQEAE (324 aa)).

This is an uncharacterized protein from Mycobacterium tuberculosis (strain CDC 1551 / Oshkosh).